The primary structure comprises 263 residues: Phosphatidylglycerol--prolipoprotein diacylglyceryl transferase (263 aa).

4 helical membrane passes run 15–35 (ISIH…VYLA), 52–72 (FILL…VIFQ), 83–103 (IFAI…GAAV), and 112–132 (AIAV…AQSI). Arg134 is an a 1,2-diacyl-sn-glycero-3-phospho-(1'-sn-glycerol) binding site. 3 consecutive transmembrane segments (helical) span residues 170–190 (VPTF…ILGL), 200–220 (GDVT…IEGM), and 230–250 (LRVS…LLYF).

It belongs to the Lgt family.

It is found in the cell membrane. The catalysed reaction is L-cysteinyl-[prolipoprotein] + a 1,2-diacyl-sn-glycero-3-phospho-(1'-sn-glycerol) = an S-1,2-diacyl-sn-glyceryl-L-cysteinyl-[prolipoprotein] + sn-glycerol 1-phosphate + H(+). Its pathway is protein modification; lipoprotein biosynthesis (diacylglyceryl transfer). In terms of biological role, catalyzes the transfer of the diacylglyceryl group from phosphatidylglycerol to the sulfhydryl group of the N-terminal cysteine of a prolipoprotein, the first step in the formation of mature lipoproteins. The protein is Phosphatidylglycerol--prolipoprotein diacylglyceryl transferase of Streptococcus thermophilus (strain ATCC BAA-250 / LMG 18311).